Reading from the N-terminus, the 256-residue chain is Adenylate kinase (256 aa).

49 to 54 lines the ATP pocket; it reads GAGKGT. The NMP stretch occupies residues 69–98; that stretch reads ATGDMLRDQVEKKTPLGIAAKKIMDAGGLV. AMP is bound by residues T70, R75, 96–98, 125–128, and Q132; these read GLV and GFPR. Positions 166 to 203 are LID; it reads GRLIHPASGRSYHKIFNPPKKAGIDDLTGEPLIQRSDD. Residues R167 and 176 to 177 contribute to the ATP site; that span reads SY. The AMP site is built by R200 and R211. Residue Q239 coordinates ATP.

This sequence belongs to the adenylate kinase family. AK2 subfamily. As to quaternary structure, monomer.

The protein resides in the cytoplasm. The protein localises to the cytosol. Its subcellular location is the mitochondrion intermembrane space. It carries out the reaction AMP + ATP = 2 ADP. In terms of biological role, catalyzes the reversible transfer of the terminal phosphate group between ATP and AMP. Plays an important role in cellular energy homeostasis and in adenine nucleotide metabolism. Adenylate kinase activity is critical for regulation of the phosphate utilization and the AMP de novo biosynthesis pathways. The protein is Adenylate kinase of Coprinopsis cinerea (strain Okayama-7 / 130 / ATCC MYA-4618 / FGSC 9003) (Inky cap fungus).